A 96-amino-acid chain; its full sequence is Venom protein 3.1 (96 aa).

A signal peptide spans Met-1–Ala-25. The interval Glu-45–Ile-84 is disordered.

The protein belongs to the non-disulfide-bridged peptide (NDBP) superfamily. In terms of tissue distribution, expressed by the venom gland.

It localises to the secreted. This chain is Venom protein 3.1, found in Lychas mucronatus (Chinese swimming scorpion).